We begin with the raw amino-acid sequence, 54 residues long: Defensin-like protein 1 (54 aa).

Disulfide bonds link C6–C54, C17–C39, C23–C48, and C27–C50.

It belongs to the DEFL family.

It is found in the secreted. In terms of biological role, possesses antifungal activity insensitive to inorganic cations. Causes germ tubes and hyphae to swell and form multiple hyphal buds. Binds to the plasma membrane of the fungus. Has no inhibitory effect on insect gut alpha-amylase. In Heuchera sanguinea (Coralbells), this protein is Defensin-like protein 1.